The sequence spans 166 residues: SUMO-conjugating enzyme UBC9 (166 aa).

The UBC core domain occupies 4–157; it reads IAAGRLAEER…VKKEAVKYAA (154 aa). The Glycyl thioester intermediate role is filled by Cys-93.

This sequence belongs to the ubiquitin-conjugating enzyme family. Interacts with brd-1 and rad-51. Interacts with smo-1 and sop-2. Interacts with bet-1 (via BROMO domain 2). Interacts with isoforms 1 and 2 of X-box-binding protein xbp-1.

The protein resides in the nucleus envelope. It participates in protein modification; protein sumoylation. Accepts the ubiquitin-like protein smo-1 from the aos-1-uba-2 E1 complex and catalyzes its covalent attachment to other proteins with the help of an E3 ligase such as gei-17. Required to sumoylate the ETS transcription factor lin-1, Polycomb protein sop-2, and intermediate filament proteins, such as ifb-1. Required for embryonic development, fertility, vulval morphogenesis, inhibition of vulval cell fates, lifespan, and neuromuscular activity. This Caenorhabditis elegans protein is SUMO-conjugating enzyme UBC9.